The sequence spans 271 residues: Chitinase 6 (271 aa).

The N-terminal stretch at Met1–Ala20 is a signal peptide. A Chitin-binding type-1 domain is found at Ala25–Val60. Intrachain disulfides connect Cys28–Cys36, Cys30–Cys42, Cys35–Cys49, Cys88–Cys137, Cys150–Cys159, and Cys239–Cys271. Residue Glu132 is the Proton donor of the active site. Asn268 carries N-linked (GlcNAc...) asparagine glycosylation.

It belongs to the glycosyl hydrolase 19 family. Chitinase class IV subfamily. Expressed in roots, leaves, sheaths and meristems.

It catalyses the reaction Random endo-hydrolysis of N-acetyl-beta-D-glucosaminide (1-&gt;4)-beta-linkages in chitin and chitodextrins.. In terms of biological role, may function in reproductive organs during embryogenesis and seed maturation. In Oryza sativa subsp. japonica (Rice), this protein is Chitinase 6 (Cht6).